The sequence spans 303 residues: tRNA pseudouridine synthase B (303 aa).

D47 (nucleophile) is an active-site residue.

This sequence belongs to the pseudouridine synthase TruB family. Type 1 subfamily.

The enzyme catalyses uridine(55) in tRNA = pseudouridine(55) in tRNA. Functionally, responsible for synthesis of pseudouridine from uracil-55 in the psi GC loop of transfer RNAs. The polypeptide is tRNA pseudouridine synthase B (Legionella pneumophila (strain Lens)).